The sequence spans 169 residues: Mitochondrial ATP-independent inner membrane protease subunit 1b (169 aa).

Residues serine 47 and lysine 91 contribute to the active site.

It belongs to the peptidase S26 family. IMP1 subfamily. As to quaternary structure, heterodimer of 2 subunits, IMP1A/B and IMP12.

It is found in the mitochondrion inner membrane. Its function is as follows. Catalyzes the removal of transit peptides required for the targeting of proteins from the mitochondrial matrix, across the inner membrane, into the inter-membrane space. The sequence is that of Mitochondrial ATP-independent inner membrane protease subunit 1b from Arabidopsis thaliana (Mouse-ear cress).